Here is a 298-residue protein sequence, read N- to C-terminus: Acetylglutamate kinase (298 aa).

Substrate-binding positions include Gly-69 to Gly-70, Arg-91, and Asn-196.

Belongs to the acetylglutamate kinase family. ArgB subfamily.

It is found in the cytoplasm. It carries out the reaction N-acetyl-L-glutamate + ATP = N-acetyl-L-glutamyl 5-phosphate + ADP. Its pathway is amino-acid biosynthesis; L-arginine biosynthesis; N(2)-acetyl-L-ornithine from L-glutamate: step 2/4. Functionally, catalyzes the ATP-dependent phosphorylation of N-acetyl-L-glutamate. In Bradyrhizobium sp. (strain ORS 278), this protein is Acetylglutamate kinase.